The following is a 124-amino-acid chain: Large ribosomal subunit protein bL12 (124 aa).

Belongs to the bacterial ribosomal protein bL12 family. As to quaternary structure, homodimer. Part of the ribosomal stalk of the 50S ribosomal subunit. Forms a multimeric L10(L12)X complex, where L10 forms an elongated spine to which 2 to 4 L12 dimers bind in a sequential fashion. Binds GTP-bound translation factors.

Forms part of the ribosomal stalk which helps the ribosome interact with GTP-bound translation factors. Is thus essential for accurate translation. This is Large ribosomal subunit protein bL12 from Brucella abortus (strain S19).